The chain runs to 50 residues: Sperm protamine P1 (50 aa).

2 disulfides stabilise this stretch: Cys-7–Cys-15 and Cys-38–Cys-46.

Belongs to the protamine P1 family. In terms of assembly, cross-linked by interchain disulfide bonds around the DNA-helix. In terms of tissue distribution, testis.

Its subcellular location is the nucleus. It localises to the chromosome. Functionally, protamines substitute for histones in the chromatin of sperm during the haploid phase of spermatogenesis. They compact sperm DNA into a highly condensed, stable and inactive complex. This is Sperm protamine P1 (PRM1) from Equus caballus (Horse).